Here is a 138-residue protein sequence, read N- to C-terminus: Actophorin (138 aa).

The residue at position 2 (Ser-2) is a Blocked amino end (Ser). In terms of domain architecture, ADF-H spans 3–134 (GIAVSDDCVQ…SEDAVSERAK (132 aa)).

This sequence belongs to the actin-binding proteins ADF family. In terms of assembly, monomer.

Its subcellular location is the cytoplasm. Functionally, forms a one to one complex with monomeric actin. Can regulate the pool available for polymerization. Severs actin filaments in a dose-dependent manner. The chain is Actophorin from Acanthamoeba castellanii (Amoeba).